We begin with the raw amino-acid sequence, 384 residues long: Succinyl-diaminopimelate desuccinylase (384 aa).

His-69 lines the Zn(2+) pocket. The active site involves Asp-71. Asp-103 provides a ligand contact to Zn(2+). Glu-137 (proton acceptor) is an active-site residue. Positions 138, 166, and 355 each coordinate Zn(2+).

The protein belongs to the peptidase M20A family. DapE subfamily. As to quaternary structure, homodimer. Zn(2+) serves as cofactor. The cofactor is Co(2+).

The enzyme catalyses N-succinyl-(2S,6S)-2,6-diaminopimelate + H2O = (2S,6S)-2,6-diaminopimelate + succinate. Its pathway is amino-acid biosynthesis; L-lysine biosynthesis via DAP pathway; LL-2,6-diaminopimelate from (S)-tetrahydrodipicolinate (succinylase route): step 3/3. Its function is as follows. Catalyzes the hydrolysis of N-succinyl-L,L-diaminopimelic acid (SDAP), forming succinate and LL-2,6-diaminopimelate (DAP), an intermediate involved in the bacterial biosynthesis of lysine and meso-diaminopimelic acid, an essential component of bacterial cell walls. The sequence is that of Succinyl-diaminopimelate desuccinylase from Rickettsia canadensis (strain McKiel).